We begin with the raw amino-acid sequence, 859 residues long: DNA-directed RNA polymerase subunit Rpo1C (859 aa).

It belongs to the RNA polymerase beta' chain family. In terms of assembly, part of the RNA polymerase complex. In terms of processing, this protein undergoes a protein self splicing that involves a post-translational excision of the intervening region (intein) followed by peptide ligation.

The protein resides in the cytoplasm. It carries out the reaction RNA(n) + a ribonucleoside 5'-triphosphate = RNA(n+1) + diphosphate. In terms of biological role, DNA-dependent RNA polymerase (RNAP) catalyzes the transcription of DNA into RNA using the four ribonucleoside triphosphates as substrates. Forms part of the jaw domain. The polypeptide is DNA-directed RNA polymerase subunit Rpo1C (Methanocaldococcus jannaschii (strain ATCC 43067 / DSM 2661 / JAL-1 / JCM 10045 / NBRC 100440) (Methanococcus jannaschii)).